We begin with the raw amino-acid sequence, 457 residues long: ATP synthase subunit beta (457 aa).

Glycine 147–threonine 154 contributes to the ATP binding site.

Belongs to the ATPase alpha/beta chains family. As to quaternary structure, F-type ATPases have 2 components, CF(1) - the catalytic core - and CF(0) - the membrane proton channel. CF(1) has five subunits: alpha(3), beta(3), gamma(1), delta(1), epsilon(1). CF(0) has three main subunits: a(1), b(2) and c(9-12). The alpha and beta chains form an alternating ring which encloses part of the gamma chain. CF(1) is attached to CF(0) by a central stalk formed by the gamma and epsilon chains, while a peripheral stalk is formed by the delta and b chains.

Its subcellular location is the cell inner membrane. It carries out the reaction ATP + H2O + 4 H(+)(in) = ADP + phosphate + 5 H(+)(out). Its function is as follows. Produces ATP from ADP in the presence of a proton gradient across the membrane. The catalytic sites are hosted primarily by the beta subunits. The sequence is that of ATP synthase subunit beta from Haemophilus influenzae (strain 86-028NP).